The chain runs to 1658 residues: Cortactin-binding protein 2 (1658 aa).

Disordered regions lie at residues 1-24, 203-235, 348-437, 451-475, and 495-612; these read MATDGASCEPDFSRAPEDAAGATA, KTKTSALEEELSAEKRRSTEMEAQMEKQLSEFD, GAAL…LHPG, GNANDPDQNGNTTQSPPSRDVSPTS, and RFTS…PPKP. Positions 119–276 form a coiled coil; it reads RKMQERMSTQ…EQLKRGNDSK (158 aa). Residues 214–235 are compositionally biased toward basic and acidic residues; it reads SAEKRRSTEMEAQMEKQLSEFD. A compositionally biased stretch (low complexity) spans 385–394; the sequence is GPSAGSASST. The segment covering 399 to 418 has biased composition (polar residues); sequence NSTAPPTVQTPGIAPQSYSQ. Residue R495 is modified to Asymmetric dimethylarginine. The span at 509 to 520 shows a compositional bias: low complexity; the sequence is AAPTGDGGTCPP. Polar residues predominate over residues 580-590; that stretch reads TMASPPSSLPQ. ANK repeat units follow at residues 706-736, 740-769, 773-802, 806-835, 839-868, and 909-939; these read GRPTLLQQAATQGNVTLLSMLLNEEGLDINY, DGHSALYSAAKNGHTDCVRLLLNAGAQVNA, NGFTPLCAAAAQGHFKCVELLISYDANINH, EGQTPLYLACKNGNKECIQLLLEAGTDRSV, DGWTPVHAAVDTGNVDSLKLLMYHRAPACR, and EGWTAAHIAASKGFKNCLEILCMHGGLEPER. Positions 1448–1478 are disordered; that stretch reads ESGAWRKVSTSPRKKSGRFSPPSWNKPGLSE. The residue at position 1521 (S1521) is a Phosphoserine. Disordered stretches follow at residues 1538–1595 and 1611–1642; these read RSES…NSQS and PRSKVTQCSQNTKRSSSSSNTRQIEINNNTKE. Residues 1539–1558 are compositionally biased toward basic and acidic residues; it reads SESDISKIADSRDDLRRFDG. Composition is skewed to polar residues over residues 1559–1569 and 1581–1595; these read SRNNPAFSTVN and PLSSHETTECSNSQS. Over residues 1619–1633 the composition is skewed to low complexity; that stretch reads SQNTKRSSSSSNTRQ.

In terms of assembly, interacts with CTTN/cortactin SH3 domain. Interacts with STRN, STRN4/zinedin and MOB4/phocein; this interactions mediate the association with the STRIPAK core complex and may regulate dendritic spine distribution of the STRIPAK complex in hippocampal neurons. Activation of glutamate receptors weakens the interaction with STRN and STRN4.

The protein resides in the cytoplasm. It is found in the cell cortex. The protein localises to the cell projection. Its subcellular location is the dendritic spine. Its function is as follows. Regulates the dendritic spine distribution of CTTN/cortactin in hippocampal neurons, and thus controls dendritic spinogenesis and dendritic spine maintenance. Associates with the striatin-interacting phosphatase and kinase (STRIPAK) core complex to regulate dendritic spine distribution of the STRIPAK complex in hippocampal neurons. In Neofelis nebulosa (Clouded leopard), this protein is Cortactin-binding protein 2 (CTTNBP2).